The following is a 1015-amino-acid chain: Putative ankyrin repeat protein R96 (1015 aa).

A compositionally biased stretch (basic residues) spans 1-14 (MSTVKKSSKKKSSK). A disordered region spans residues 1-37 (MSTVKKSSKKKSSKKSSSGNESSKKSSPKIVPKHTAK). ANK repeat units lie at residues 136–165 (NGHK…NIDF), 168–201 (APSN…AVNI), 202–231 (DGRS…DVEV), 340–370 (LGHN…DFQA), 374–403 (NITN…KIVS), 456–485 (SGYR…TIFA), 498–527 (NNND…QFQL), and 535–564 (TVPT…ITDC).

This chain is Putative ankyrin repeat protein R96, found in Acanthamoeba polyphaga mimivirus (APMV).